Consider the following 119-residue polypeptide: Holo-[acyl-carrier-protein] synthase (119 aa).

Positions 5 and 51 each coordinate Mg(2+).

Belongs to the P-Pant transferase superfamily. AcpS family. The cofactor is Mg(2+).

The protein localises to the cytoplasm. The enzyme catalyses apo-[ACP] + CoA = holo-[ACP] + adenosine 3',5'-bisphosphate + H(+). In terms of biological role, transfers the 4'-phosphopantetheine moiety from coenzyme A to a Ser of acyl-carrier-protein. This chain is Holo-[acyl-carrier-protein] synthase, found in Helicobacter pylori (strain HPAG1).